Here is an 80-residue protein sequence, read N- to C-terminus: Raniseptin-8 (80 aa).

An N-terminal signal peptide occupies residues 1–22 (MAFLKKSLFLVLFLGIVSLSIC). Residues 23–49 (EEEKREGEEEEKQEEENEELSEEELRE) constitute a propeptide that is removed on maturation. The tract at residues 27 to 46 (REGEEEEKQEEENEELSEEE) is disordered. The segment covering 30–44 (EEEEKQEEENEELSE) has biased composition (acidic residues).

This sequence belongs to the frog skin active peptide (FSAP) family. Dermaseptin subfamily. Expressed by the skin glands.

It localises to the secreted. Its function is as follows. Has antibacterial activity. This chain is Raniseptin-8, found in Boana raniceps (Chaco tree frog).